The sequence spans 405 residues: Potassium channel subfamily K member 18 (405 aa).

A helical transmembrane segment spans residues 43 to 63; that stretch reads LPGLCFLCCLVTYALVGAALF. N94 carries N-linked (GlcNAc...) asparagine glycosylation. Positions 125 to 151 form an intramembrane region, pore-forming; that stretch reads FLSALFFCCTVFSTVGYGHMYPVTRLG. Residues T138, V139, G140, and Y141 each contribute to the K(+) site. The interval 138–143 is selectivity filter 1; that stretch reads TVGYGH. A helical transmembrane segment spans residues 153–173; that stretch reads FLCMLYALFGIPLMFLVLTDI. The tract at residues 221–226 is interaction with calcineurin; that stretch reads PQIVID. Residues 272–277 are interaction with YWHAH; sequence RSNSCP. Phosphoserine occurs at positions 275 and 287. A helical transmembrane segment spans residues 304 to 324; it reads IPLPVIALVIFAYISCAAAIL. Residues 337-351 constitute an intramembrane region (pore-forming); sequence FYFCFVTLTTIGFGD. A selectivity filter 2 region spans residues 346-351; the sequence is TIGFGD. A helical transmembrane segment spans residues 358–378; it reads HFFLFFSIYIIVGMEILFIAF.

Belongs to the two pore domain potassium channel (TC 1.A.1.8) family. As to quaternary structure, homodimer. Heterodimer with KCNK2. Heterodimer with KCNK10. Interacts with calcineurin. Interacts with YWHAH, in a phosphorylation-dependent manner. In terms of processing, phosphorylation of Ser-275 is required for the binding of 14-3-3eta/YWHAH. Calcineurin-mediated dephosphorylation of Ser-287 enhances channel activity. Post-translationally, N-glycosylated.

The protein localises to the cell membrane. It catalyses the reaction K(+)(in) = K(+)(out). Activated by volatile anesthetics, such as isoflurane and inhibited by local anesthetics such as bupivacaine and lidocaine. Inhibited by extracellular acidic pH. Inhibited by Zn(2+) ions. Its function is as follows. K(+) channel that conducts outward and inward rectifying currents at depolarized and hyperpolarized membrane potentials, respectively. The outward rectifying currents are voltage-dependent, coupled to K(+) electrochemical gradient across the membrane, whereas the inward currents can be induced in response to activation of Ca(2+)-mobilizing receptors. Homo- and heterodimerizes to form functional channels with distinct regulatory and gating properties. In trigeminal ganglia sensory neurons, the heterodimers of KCNK18/TRESK and KCNK2/TREK-1 or KCNK10/TREK-2 inhibit neuronal firing and neurogenic inflammation by stabilizing the resting membrane potential at K(+) equilibrium potential as well as by regulating the threshold of action potentials and the spike frequency. In thymocytes, conducts K(+) currents upon T cell receptor (TCR) signaling leading to sustained Ca(2+) influx and NF-kappa-B activation, FOXP3 transcription and positive selection of regulatory T cell (Treg) progenitor subsets. Appears to mediate the analgesics effects of hydroxy-alpha-sanshool, a metabolite naturally present in Schezuan pepper and other Xanthoxylum plants. The chain is Potassium channel subfamily K member 18 (Kcnk18) from Rattus norvegicus (Rat).